We begin with the raw amino-acid sequence, 877 residues long: Probable linoleate 9S-lipoxygenase 4 (877 aa).

Residues 38–165 (GDFHASLLDG…NYQYERVFFA (128 aa)) form the PLAT domain. The region spanning 168 to 877 (TYLPSKMPAP…AMGIPNSISI (710 aa)) is the Lipoxygenase domain. The interval 229–252 (GSQELPYPRRGRTGRAPTKTDPNT) is disordered. Positions 528, 533, 719, 723, and 877 each coordinate Fe cation.

Belongs to the lipoxygenase family. Fe cation is required as a cofactor.

It catalyses the reaction (9Z,12Z)-octadecadienoate + O2 = (9S)-hydroperoxy-(10E,12Z)-octadecadienoate. It functions in the pathway lipid metabolism; oxylipin biosynthesis. Plant lipoxygenase may be involved in a number of diverse aspects of plant physiology including growth and development, pest resistance, and senescence or responses to wounding. Catalyzes the hydroperoxidation of lipids containing a cis,cis-1,4-pentadiene structure. This chain is Probable linoleate 9S-lipoxygenase 4, found in Oryza sativa subsp. japonica (Rice).